The sequence spans 407 residues: Aminomethyltransferase, mitochondrial (407 aa).

Residues 1 to 29 constitute a mitochondrion transit peptide; sequence MRGGLWQLGQSITRRLGQSDKKTIARRCY. 3 residues coordinate substrate: Glu-234, Arg-265, and Tyr-403.

This sequence belongs to the GcvT family. The glycine cleavage system is composed of four proteins: P, T, L and H.

It is found in the mitochondrion. It carries out the reaction N(6)-[(R)-S(8)-aminomethyldihydrolipoyl]-L-lysyl-[protein] + (6S)-5,6,7,8-tetrahydrofolate = N(6)-[(R)-dihydrolipoyl]-L-lysyl-[protein] + (6R)-5,10-methylene-5,6,7,8-tetrahydrofolate + NH4(+). Functionally, the glycine cleavage system catalyzes the degradation of glycine. The polypeptide is Aminomethyltransferase, mitochondrial (GDCST) (Flaveria pringlei).